Reading from the N-terminus, the 475-residue chain is Ribulose bisphosphate carboxylase large chain (475 aa).

Positions Met1–Ser2 are excised as a propeptide. Pro3 is modified (N-acetylproline). Lys14 is modified (N6,N6,N6-trimethyllysine). Substrate is bound by residues Asn123 and Thr173. Lys175 functions as the Proton acceptor in the catalytic mechanism. Lys177 serves as a coordination point for substrate. Residues Lys201, Asp203, and Glu204 each coordinate Mg(2+). Lys201 carries the N6-carboxylysine modification. Catalysis depends on His294, which acts as the Proton acceptor. Substrate is bound by residues Arg295, His327, and Ser379.

It belongs to the RuBisCO large chain family. Type I subfamily. Heterohexadecamer of 8 large chains and 8 small chains; disulfide-linked. The disulfide link is formed within the large subunit homodimers. It depends on Mg(2+) as a cofactor. The disulfide bond which can form in the large chain dimeric partners within the hexadecamer appears to be associated with oxidative stress and protein turnover.

Its subcellular location is the plastid. The protein resides in the chloroplast. It catalyses the reaction 2 (2R)-3-phosphoglycerate + 2 H(+) = D-ribulose 1,5-bisphosphate + CO2 + H2O. It carries out the reaction D-ribulose 1,5-bisphosphate + O2 = 2-phosphoglycolate + (2R)-3-phosphoglycerate + 2 H(+). Functionally, ruBisCO catalyzes two reactions: the carboxylation of D-ribulose 1,5-bisphosphate, the primary event in carbon dioxide fixation, as well as the oxidative fragmentation of the pentose substrate in the photorespiration process. Both reactions occur simultaneously and in competition at the same active site. The chain is Ribulose bisphosphate carboxylase large chain from Ostrya virginiana (American hophornbeam).